Reading from the N-terminus, the 126-residue chain is Fluoride-specific ion channel FluC (126 aa).

4 helical membrane-spanning segments follow: residues 3 to 23, 37 to 57, 68 to 88, and 101 to 121; these read PYLLLAVGTGGFVGAILRFLI, VGTLSVNVLGSFIIGFLALYF, LVITGMLGALTTFSTFSLETV, and TNITLNVFLCVVATMLGMMLF. Residues Gly-75 and Thr-78 each contribute to the Na(+) site.

It belongs to the fluoride channel Fluc/FEX (TC 1.A.43) family.

Its subcellular location is the cell inner membrane. It carries out the reaction fluoride(in) = fluoride(out). Na(+) is not transported, but it plays an essential structural role and its presence is essential for fluoride channel function. In terms of biological role, fluoride-specific ion channel. Important for reducing fluoride concentration in the cell, thus reducing its toxicity. The polypeptide is Fluoride-specific ion channel FluC (Sulfurovum sp. (strain NBC37-1)).